We begin with the raw amino-acid sequence, 212 residues long: External core antigen (212 aa).

A signal peptide spans 1–19 (MQLFHLCLIISCSCPTVQA). The interval 25–27 (GWL) is HBEAG. The disordered stretch occupies residues 165 to 212 (NAPILSTLPETTVVRRRGRSPRRRTPSPRRRRSQSPRRRRSQSPASQC). Basic residues predominate over residues 178–205 (VRRRGRSPRRRTPSPRRRRSQSPRRRRS). A 1; half-length repeat occupies 184-190 (SPRRRTP). The 3 X 8 AA repeats of S-P-R-R-R-R-S-Q stretch occupies residues 184–206 (SPRRRTPSPRRRRSQSPRRRRSQ). The propeptide occupies 184-212 (SPRRRTPSPRRRRSQSPRRRRSQSPASQC). A run of 2 repeats spans residues 191–198 (SPRRRRSQ) and 199–206 (SPRRRRSQ).

It belongs to the orthohepadnavirus precore antigen family. As to quaternary structure, homodimerizes. Post-translationally, phosphorylated. Cleaved by host furin.

The protein resides in the secreted. It localises to the host nucleus. May regulate immune response to the intracellular capsid in acting as a T-cell tolerogen, by having an immunoregulatory effect which prevents destruction of infected cells by cytotoxic T-cells. This immune regulation may predispose to chronicity during perinatal infections and prevent severe liver injury during adult infections. The polypeptide is External core antigen (Hepatitis B virus genotype F2 subtype adw4q (isolate Senegal/9203) (HBV-F)).